Reading from the N-terminus, the 403-residue chain is Putative F-box/LRR-repeat protein At5g38386 (403 aa).

The 47-residue stretch at Met-1 to Phe-47 folds into the F-box domain. LRR repeat units follow at residues Ile-64–Cys-91, Gly-93–Met-119, Val-131–His-156, Leu-175–Asp-203, Tyr-243–Ser-274, and Val-275–Ala-300.

The protein is Putative F-box/LRR-repeat protein At5g38386 of Arabidopsis thaliana (Mouse-ear cress).